The sequence spans 270 residues: NAD kinase (270 aa).

The Proton acceptor role is filled by Asp-49. Residues 49–50 (DG), Arg-54, 126–127 (NE), Arg-152, Asp-154, 165–170 (TAYNKS), Ala-189, and Gln-227 contribute to the NAD(+) site.

The protein belongs to the NAD kinase family. The cofactor is a divalent metal cation.

Its subcellular location is the cytoplasm. The enzyme catalyses NAD(+) + ATP = ADP + NADP(+) + H(+). In terms of biological role, involved in the regulation of the intracellular balance of NAD and NADP, and is a key enzyme in the biosynthesis of NADP. Catalyzes specifically the phosphorylation on 2'-hydroxyl of the adenosine moiety of NAD to yield NADP. The polypeptide is NAD kinase (Lactococcus lactis subsp. cremoris (strain SK11)).